Here is an 86-residue protein sequence, read N- to C-terminus: Defensin-like protein a (86 aa).

The first 23 residues, 1 to 23 (MRCSVLFVVSYVIMSLLISHVQG), serve as a signal peptide directing secretion. Disulfide bonds link C33-C81, C43-C67, C51-C76, and C65-C78.

This sequence belongs to the DEFL family. Expressed specifically in anthers.

It localises to the secreted. Functionally, involved in self-incompatibility. This is Defensin-like protein a (SCRa) from Arabidopsis lyrata (Lyre-leaved rock-cress).